A 259-amino-acid chain; its full sequence is DNA repair protein RecO (259 aa).

The protein belongs to the RecO family.

In terms of biological role, involved in DNA repair and RecF pathway recombination. The protein is DNA repair protein RecO of Syntrophus aciditrophicus (strain SB).